A 112-amino-acid chain; its full sequence is MCVDCVEKEYPNRGNICLESGSFLLNFTGCAVCNKRDFMLITNKSLKEEDGEEIVTYDHLCKNCHHVIARHEYTFSIMDEFQEYTMLCLLCGKAEDTISILPDDPRQMTLLF.

Zn(2+)-binding residues include Cys2, Cys5, Cys30, Cys33, His59, Cys61, Cys64, His66, His71, Cys88, and Cys91.

It belongs to the Churchill family.

Transcriptional activator that mediates FGF signaling during neural development. Plays a role in the regulation of cell movement. Does not bind DNA by itself. In Bos taurus (Bovine), this protein is Protein Churchill (CHURC1).